Reading from the N-terminus, the 89-residue chain is Small ribosomal subunit protein uS15 (89 aa).

Belongs to the universal ribosomal protein uS15 family. In terms of assembly, part of the 30S ribosomal subunit. Forms a bridge to the 50S subunit in the 70S ribosome, contacting the 23S rRNA.

Its function is as follows. One of the primary rRNA binding proteins, it binds directly to 16S rRNA where it helps nucleate assembly of the platform of the 30S subunit by binding and bridging several RNA helices of the 16S rRNA. Functionally, forms an intersubunit bridge (bridge B4) with the 23S rRNA of the 50S subunit in the ribosome. The chain is Small ribosomal subunit protein uS15 from Nitratiruptor sp. (strain SB155-2).